A 261-amino-acid polypeptide reads, in one-letter code: Imidazole glycerol phosphate synthase subunit HisF (261 aa).

Residues Asp11 and Asp130 contribute to the active site.

It belongs to the HisA/HisF family. As to quaternary structure, heterodimer of HisH and HisF.

It localises to the cytoplasm. It catalyses the reaction 5-[(5-phospho-1-deoxy-D-ribulos-1-ylimino)methylamino]-1-(5-phospho-beta-D-ribosyl)imidazole-4-carboxamide + L-glutamine = D-erythro-1-(imidazol-4-yl)glycerol 3-phosphate + 5-amino-1-(5-phospho-beta-D-ribosyl)imidazole-4-carboxamide + L-glutamate + H(+). Its pathway is amino-acid biosynthesis; L-histidine biosynthesis; L-histidine from 5-phospho-alpha-D-ribose 1-diphosphate: step 5/9. Its function is as follows. IGPS catalyzes the conversion of PRFAR and glutamine to IGP, AICAR and glutamate. The HisF subunit catalyzes the cyclization activity that produces IGP and AICAR from PRFAR using the ammonia provided by the HisH subunit. This is Imidazole glycerol phosphate synthase subunit HisF from Limosilactobacillus fermentum (strain NBRC 3956 / LMG 18251) (Lactobacillus fermentum).